Reading from the N-terminus, the 569-residue chain is Zinc finger and BTB domain-containing protein 7A (569 aa).

The BTB domain occupies 34-101 (CDVVILVEGR…AYTATLTVST (68 aa)). Residues 214–304 (YGPGPPADRP…LSGAAEGEDG (91 aa)) form a disordered region. The tract at residues 275–569 (EEEAAALSEA…VATAEGNFAT (295 aa)) is mediates interaction with KHDRBS1. Positions 279 to 288 (AALSEAAPEP) are enriched in low complexity. 2 positions are modified to phosphoserine: serine 331 and serine 335. The interval 343–569 (MDYYLKYFSG…VATAEGNFAT (227 aa)) is mediates interaction with RELA. The mediates interaction with SMAD4 stretch occupies residues 371–569 (RAKAFQKCPI…VATAEGNFAT (199 aa)). 2 C2H2-type zinc fingers span residues 376 to 398 (QKCPICEKVIQGAGKLPRHIRTH) and 404 to 426 (YECNICKVRFTRQDKLKVHMRKH). Lysine 430 is covalently cross-linked (Glycyl lysine isopeptide (Lys-Gly) (interchain with G-Cter in SUMO2)). The C2H2-type 3 zinc-finger motif lies at 432 to 454 (YLCQQCGAAFAHNYDLKNHMRVH). Residues 460 to 484 (YQCDSCCKTFVRSDHLHRHLKKDGC) form a C2H2-type 4; atypical zinc finger. The tract at residues 480 to 569 (KKDGCNGVPS…VATAEGNFAT (90 aa)) is disordered. Residues 498–519 (RGVPPDVPAGAGAPPGLPDAPR) are compositionally biased toward low complexity. Lysine 527 participates in a covalent cross-link: Glycyl lysine isopeptide (Lys-Gly) (interchain with G-Cter in SUMO2). Serine 537 is subject to Phosphoserine. The segment covering 548-557 (GSGGDDGAGG) has biased composition (gly residues).

As to quaternary structure, homodimer. Interacts with BCL6. Interacts with RELA; involved in the control by RELA of the accessibility of target gene promoters. Interacts with AR (via NR LBD domain); the interaction is direct and androgen-dependent. Interacts with NCOR1. Interacts with NCOR2. Interacts with SMAD4; the interaction is direct and stimulated by TGFB1. Interacts with HDAC1. Interacts with SP1; ZBTB7A prevents the binding to GC-rich motifs in promoters and represses the transcriptional activity of SP1. Interacts with the DNA-dependent protein kinase complex/DNA-PKc. Interacts with KHDRBS1; negatively regulates KHDRBS1 splicing activity. Post-translationally, sumoylated. Undergoes sumoylation with SUMO1 that may regulate its transcriptional activity. As to expression, widely expressed. In normal thymus, expressed in medullary epithelial cells and Hassle's corpuscles (at protein level). In the spleen, mainly expressed in the white pulp germinal centers (at protein level). Up-regulated in thymic lymphomas.

It is found in the nucleus. Functionally, transcription factor that represses the transcription of a wide range of genes involved in cell proliferation and differentiation. Directly and specifically binds to the consensus sequence 5'-[GA][CA]GACCCCCCCCC-3' and represses transcription both by regulating the organization of chromatin and through the direct recruitment of transcription factors to gene regulatory regions. Negatively regulates SMAD4 transcriptional activity in the TGF-beta signaling pathway through these two mechanisms. That is, recruits the chromatin regulator HDAC1 to the SMAD4-DNA complex and in parallel prevents the recruitment of the transcriptional activators CREBBP and EP300. Collaborates with transcription factors like RELA to modify the accessibility of gene transcription regulatory regions to secondary transcription factors. Also directly interacts with transcription factors like SP1 to prevent their binding to DNA. Functions as an androgen receptor/AR transcriptional corepressor by recruiting NCOR1 and NCOR2 to the androgen response elements/ARE on target genes. Thereby, negatively regulates androgen receptor signaling and androgen-induced cell proliferation. Involved in the switch between fetal and adult globin expression during erythroid cells maturation. Through its interaction with the NuRD complex regulates chromatin at the fetal globin genes to repress their transcription. Specifically represses the transcription of the tumor suppressor ARF isoform from the CDKN2A gene. Efficiently abrogates E2F1-dependent CDKN2A transactivation. Regulates chondrogenesis through the transcriptional repression of specific genes via a mechanism that also requires histone deacetylation. Regulates cell proliferation through the transcriptional regulation of genes involved in glycolysis. Involved in adipogenesis through the regulation of genes involved in adipocyte differentiation. Plays a key role in the differentiation of lymphoid progenitors into B and T lineages. Promotes differentiation towards the B lineage by inhibiting the T-cell instructive Notch signaling pathway through the specific transcriptional repression of Notch downstream target genes. Also regulates osteoclast differentiation. May also play a role, independently of its transcriptional activity, in double-strand break repair via classical non-homologous end joining/cNHEJ. Recruited to double-strand break sites on damage DNA, interacts with the DNA-dependent protein kinase complex and directly regulates its stability and activity in DNA repair. May also modulate the splicing activity of KHDRBS1 toward BCL2L1 in a mechanism which is histone deacetylase-dependent and thereby negatively regulates the pro-apoptotic effect of KHDRBS1. This chain is Zinc finger and BTB domain-containing protein 7A, found in Mus musculus (Mouse).